A 1128-amino-acid polypeptide reads, in one-letter code: Exportin-6 (1128 aa).

Residues 31–97 form the Importin N-terminal domain; the sequence is IEELLNSFAG…RSCLPKLLLS (67 aa).

This sequence belongs to the exportin family.

It is found in the nucleus. The protein localises to the cytoplasm. Functionally, mediates the nuclear export of actin and profilin-actin complexes in somatic cells. The sequence is that of Exportin-6 (xpo6) from Danio rerio (Zebrafish).